Here is a 1214-residue protein sequence, read N- to C-terminus: NBPF family member NBPF1 (1214 aa).

The stretch at 70–128 (MLRNERQFKEEKLAEQLKQAEELRQYKVLVHSQERELTQLREKLREGRDASRSLNQHLQ) forms a coiled coil. Residues 162–200 (LSPENDEDEDEDVQVEEAEKVLESSAPREVQKAEESKVP) are disordered. A compositionally biased stretch (acidic residues) spans 165-177 (ENDEDEDEDVQVE). The region spanning 165 to 259 (ENDEDEDEDV…ECQDAVNILP (95 aa)) is the Olduvai 1 domain. A compositionally biased stretch (basic and acidic residues) spans 190-200 (EVQKAEESKVP). Residues 292–399 (NEKLHPQLAE…ASRSLNQHLQ (108 aa)) adopt a coiled-coil conformation. The interval 433 to 471 (LSPENDEDEDEDVQVEEAEKVLESSAPREVQKAEESKVP) is disordered. Residues 436-448 (ENDEDEDEDVQVE) are compositionally biased toward acidic residues. The 95-residue stretch at 436 to 530 (ENDEDEDEDV…ECQDAVNILP (95 aa)) folds into the Olduvai 2 domain. Residues 461-471 (EVQKAEESKVP) show a composition bias toward basic and acidic residues. Residues 610–670 (KSMLRNERQF…ASCSLNQHLQ (61 aa)) are a coiled coil. Olduvai domains follow at residues 707-799 (ENDN…HIIP), 800-888 (ENES…ATGP), 891-946 (SREL…LDMD), 947-1038 (EIEK…PPCP), 1041-1114 (SREL…RSTK), and 1116-1214 (RRRR…IFPQ). Disordered regions lie at residues 722–746 (EKVQ…EDSL) and 791–837 (WEDA…EGYS). Acidic residues-rich tracts occupy residues 801 to 810 (NESDDEEEEE) and 821 to 833 (ESEE…ESWD). Basic residues predominate over residues 1102–1121 (GKGKKRRGRRSTKKRRRRGR). The tract at residues 1102–1136 (GKGKKRRGRRSTKKRRRRGRKEGEEDQNPPCPRLS) is disordered.

The protein belongs to the NBPF family. As to expression, widely expressed. The only tissue which shows a weak expression is kidney.

It is found in the cytoplasm. This chain is NBPF family member NBPF1, found in Homo sapiens (Human).